Reading from the N-terminus, the 123-residue chain is Small ribosomal subunit protein uS12 (123 aa).

A disordered region spans residues 1–29 (MPTINQLVRKGREPQKAKSKVPAMEQNPQ). 3-methylthioaspartic acid is present on Asp-89.

It belongs to the universal ribosomal protein uS12 family. As to quaternary structure, part of the 30S ribosomal subunit. Contacts proteins S8 and S17. May interact with IF1 in the 30S initiation complex.

Its function is as follows. With S4 and S5 plays an important role in translational accuracy. In terms of biological role, interacts with and stabilizes bases of the 16S rRNA that are involved in tRNA selection in the A site and with the mRNA backbone. Located at the interface of the 30S and 50S subunits, it traverses the body of the 30S subunit contacting proteins on the other side and probably holding the rRNA structure together. The combined cluster of proteins S8, S12 and S17 appears to hold together the shoulder and platform of the 30S subunit. This chain is Small ribosomal subunit protein uS12, found in Novosphingobium aromaticivorans (strain ATCC 700278 / DSM 12444 / CCUG 56034 / CIP 105152 / NBRC 16084 / F199).